The primary structure comprises 449 residues: Protein adenylyltransferase FICD (449 aa).

Residues 15 to 35 traverse the membrane as a helical segment; sequence LLWGWGPILFGLLGSVFVLLL. TPR repeat units follow at residues 96–129 and 130–163; these read AKAA…NPEF and VEAL…SPCH. Residues 220–225 carry the Inhibitory (S/T)XXXE(G/N) motif motif; that stretch reads TVAIEG. ATP-binding positions include Glu-224, 250 to 251, 358 to 360, and Arg-364; these read EQ and GNG. One can recognise a Fido domain in the interval 275–410; sequence ITVNDILEIH…VRPFIRFIAK (136 aa).

The protein belongs to the fic family.

The protein localises to the membrane. The enzyme catalyses L-tyrosyl-[protein] + ATP = O-(5'-adenylyl)-L-tyrosyl-[protein] + diphosphate. It catalyses the reaction L-threonyl-[protein] + ATP = 3-O-(5'-adenylyl)-L-threonyl-[protein] + diphosphate. Adenylyltransferase activity is inhibited by the inhibitory helix present at the N-terminus: Glu-224 binds ATP and competes with ATP-binding at Arg-364, thereby preventing adenylyltransferase activity. Activation dissociates ATP-binding from Glu-224, allowing ordered binding of the entire ATP moiety with the alpha-phosphate in an orientation that is productive for accepting an incoming target hydroxyl side chain. Adenylyltransferase that mediates the addition of adenosine 5'-monophosphate (AMP) to specific residues of target proteins. This is Protein adenylyltransferase FICD (ficd) from Danio rerio (Zebrafish).